Reading from the N-terminus, the 134-residue chain is Neuropeptide-like peptide 11 (134 aa).

The signal sequence occupies residues 1-20; the sequence is MMSTLALVSLAIFGIAVVCA. The propeptide occupies 21–106; that stretch reads APKPATVPVA…YNRLIDAGKK (86 aa). Ala131 is subject to Alanine amide.

The polypeptide is Neuropeptide-like peptide 11 (nlp-11) (Caenorhabditis elegans).